The following is a 402-amino-acid chain: Probable 2,3-bisphosphoglycerate-independent phosphoglycerate mutase (402 aa).

The protein belongs to the BPG-independent phosphoglycerate mutase family. A-PGAM subfamily.

It catalyses the reaction (2R)-2-phosphoglycerate = (2R)-3-phosphoglycerate. It participates in carbohydrate degradation; glycolysis; pyruvate from D-glyceraldehyde 3-phosphate: step 3/5. In terms of biological role, catalyzes the interconversion of 2-phosphoglycerate and 3-phosphoglycerate. This chain is Probable 2,3-bisphosphoglycerate-independent phosphoglycerate mutase, found in Thermosipho melanesiensis (strain DSM 12029 / CIP 104789 / BI429).